Consider the following 65-residue polypeptide: Prokaryotic ubiquitin-like protein Pup (65 aa).

Residues 1–38 (MANAQQQVFGGGGGDDAENNDAPQQGSGTQQVNVTGTD) form a disordered region. Residues 21 to 59 (DAPQQGSGTQQVNVTGTDDLLDEIDGLLETNAEEFVRSY) are ARC ATPase binding. The span at 22-34 (APQQGSGTQQVNV) shows a compositional bias: polar residues. Glutamine 65 is modified (deamidated glutamine). Glutamine 65 participates in a covalent cross-link: Isoglutamyl lysine isopeptide (Gln-Lys) (interchain with K-? in acceptor proteins).

Belongs to the prokaryotic ubiquitin-like protein family. As to quaternary structure, strongly interacts with the proteasome-associated ATPase ARC through a hydrophobic interface; the interacting region of Pup lies in its C-terminal half. There is one Pup binding site per ARC hexamer ring. In terms of processing, is modified by deamidation of its C-terminal glutamine to glutamate by the deamidase Dop, a prerequisite to the subsequent pupylation process.

Its pathway is protein degradation; proteasomal Pup-dependent pathway. In terms of biological role, protein modifier that is covalently attached to lysine residues of substrate proteins, thereby targeting them for proteasomal degradation. The tagging system is termed pupylation. This chain is Prokaryotic ubiquitin-like protein Pup, found in Corynebacterium urealyticum (strain ATCC 43042 / DSM 7109).